The following is a 431-amino-acid chain: Tyrosine--tRNA ligase (431 aa).

Tyrosine 33 lines the L-tyrosine pocket. The 'HIGH' region motif lies at 38-47 (PTADSLHIGS). Tyrosine 172 and glutamine 176 together coordinate L-tyrosine. A 'KMSKS' region motif is present at residues 234-238 (KFGKS). Lysine 237 contributes to the ATP binding site. An S4 RNA-binding domain is found at 364–431 (LDIVTVLNEK…KKNYFVIRVV (68 aa)).

The protein belongs to the class-I aminoacyl-tRNA synthetase family. TyrS type 1 subfamily. As to quaternary structure, homodimer.

The protein localises to the cytoplasm. The catalysed reaction is tRNA(Tyr) + L-tyrosine + ATP = L-tyrosyl-tRNA(Tyr) + AMP + diphosphate + H(+). Functionally, catalyzes the attachment of tyrosine to tRNA(Tyr) in a two-step reaction: tyrosine is first activated by ATP to form Tyr-AMP and then transferred to the acceptor end of tRNA(Tyr). This is Tyrosine--tRNA ligase from Flavobacterium johnsoniae (strain ATCC 17061 / DSM 2064 / JCM 8514 / BCRC 14874 / CCUG 350202 / NBRC 14942 / NCIMB 11054 / UW101) (Cytophaga johnsonae).